The primary structure comprises 37 residues: Large ribosomal subunit protein bL12 (37 aa).

This sequence belongs to the bacterial ribosomal protein bL12 family. Homodimer. Part of the ribosomal stalk of the 50S ribosomal subunit. Forms a multimeric L10(L12)X complex, where L10 forms an elongated spine to which 2 to 4 L12 dimers bind in a sequential fashion. Binds GTP-bound translation factors.

In terms of biological role, forms part of the ribosomal stalk which helps the ribosome interact with GTP-bound translation factors. Is thus essential for accurate translation. The protein is Large ribosomal subunit protein bL12 (rplL) of Clostridium pasteurianum.